A 460-amino-acid polypeptide reads, in one-letter code: Probable fibrosin-1 (460 aa).

A Glycyl lysine isopeptide (Lys-Gly) (interchain with G-Cter in SUMO2) cross-link involves residue Lys8. 3 disordered regions span residues 40–79, 205–311, and 406–460; these read SLQGAFQPKSTNPELPPRLGPVPSGLSQKGTQIPDHFRPP, FAQK…KEEA, and YSRL…RADR. Pro residues predominate over residues 212 to 223; that stretch reads GAPPAFASPPDP. 2 positions are modified to asymmetric dimethylarginine: Arg229 and Arg239. Positions 248–272 are enriched in basic and acidic residues; the sequence is GSDKERPVERREPSITKEEKDRDLP. Ser281 bears the Phosphoserine mark. Residues 288–311 show a composition bias toward basic and acidic residues; it reads RAGEEGPRPTKESVRVKEERKEEA. Residues 436–453 show a composition bias toward pro residues; that stretch reads APPPLVPAPRPSSPPRGP.

In Homo sapiens (Human), this protein is Probable fibrosin-1 (FBRS).